Reading from the N-terminus, the 224-residue chain is Ribonuclease T (224 aa).

The Exonuclease domain maps to 20-194 (VVIDVETAGF…YDTERTAELF (175 aa)). Aspartate 23, glutamate 25, histidine 181, and aspartate 186 together coordinate Mg(2+). The Proton donor/acceptor role is filled by histidine 181.

Belongs to the RNase T family. Homodimer. Mg(2+) is required as a cofactor.

In terms of biological role, trims short 3' overhangs of a variety of RNA species, leaving a one or two nucleotide 3' overhang. Responsible for the end-turnover of tRNA: specifically removes the terminal AMP residue from uncharged tRNA (tRNA-C-C-A). Also appears to be involved in tRNA biosynthesis. This chain is Ribonuclease T, found in Enterobacter sp. (strain 638).